A 402-amino-acid polypeptide reads, in one-letter code: MAKSKDEIKEEIAKAIINQVSKTDLSRRRALSTLAKGGIIAGVLAAFGAGFGSGYVTAPKGSSSSGVAPPQPGFMYGQVPEHPTWKIVFINHVTTNPFFVPTQYGIQDACLLLDCNYQWTGSETSDTTTMVNDMEAAISQGANGIAVSVISPNAFDKPTQDALNAGIPVFAYNAYIPTDDPSYSQYHNPPYLGYIGQSLYASGQLFGQRILNLVPSGSRVALFIATPGTANIQPRIDGIQSVIEGHYTIDVVATGALVSDEQSAIESYFNSHPDVKGMFAVDAGSTQGVGNVLREHGIKTVSNGGTIAAGGYDLLPATIQNIVDGYLDFTIDQQPYLQGFLPTLAIYLYLISDTLVYPLNIDTGSKFITNSNIQPYLLASRYEGSSTAYKPTSTTSSSSSSG.

A helical transmembrane segment spans residues 38 to 58 (GIIAGVLAAFGAGFGSGYVTA).

This sequence belongs to the bacterial solute-binding protein 2 family. The complex is composed of two ATP-binding proteins (XylG), two transmembrane proteins (XylH) and a solute-binding protein (XylF).

Its subcellular location is the cell membrane. Part of the ABC transporter complex XylFGH involved in the uptake of xylose and arabinose. This chain is Xylose/arabinose-binding protein XylF, found in Sulfolobus acidocaldarius (strain ATCC 33909 / DSM 639 / JCM 8929 / NBRC 15157 / NCIMB 11770).